Reading from the N-terminus, the 219-residue chain is Maleylacetoacetate isomerase (219 aa).

Residues 4-87 (NKTVLYSYWR…YLEETHPENP (84 aa)) form the GST N-terminal domain. Glutathione is bound by residues 14-19 (SSCSWR), Q45, 71-72 (QS), Q111, and 115-117 (NLK). In terms of domain architecture, GST C-terminal spans 92–217 (GSYERAIARQ…LPQNQPDAEP (126 aa)).

The protein belongs to the GST superfamily. Zeta family. Requires glutathione as cofactor.

The enzyme catalyses 4-maleylacetoacetate = 4-fumarylacetoacetate. It functions in the pathway amino-acid degradation; L-phenylalanine degradation; acetoacetate and fumarate from L-phenylalanine: step 5/6. This chain is Maleylacetoacetate isomerase (mai), found in Dictyostelium discoideum (Social amoeba).